The sequence spans 255 residues: Indole-3-glycerol phosphate synthase (255 aa).

It belongs to the TrpC family.

It catalyses the reaction 1-(2-carboxyphenylamino)-1-deoxy-D-ribulose 5-phosphate + H(+) = (1S,2R)-1-C-(indol-3-yl)glycerol 3-phosphate + CO2 + H2O. The protein operates within amino-acid biosynthesis; L-tryptophan biosynthesis; L-tryptophan from chorismate: step 4/5. The chain is Indole-3-glycerol phosphate synthase from Streptococcus pneumoniae serotype 2 (strain D39 / NCTC 7466).